Reading from the N-terminus, the 311-residue chain is 4-diphosphocytidyl-2-C-methyl-D-erythritol kinase (311 aa).

The active site involves K13. 114 to 124 (PVAGGMAGGSA) lines the ATP pocket. D156 is a catalytic residue.

It belongs to the GHMP kinase family. IspE subfamily.

The enzyme catalyses 4-CDP-2-C-methyl-D-erythritol + ATP = 4-CDP-2-C-methyl-D-erythritol 2-phosphate + ADP + H(+). Its pathway is isoprenoid biosynthesis; isopentenyl diphosphate biosynthesis via DXP pathway; isopentenyl diphosphate from 1-deoxy-D-xylulose 5-phosphate: step 3/6. Functionally, catalyzes the phosphorylation of the position 2 hydroxy group of 4-diphosphocytidyl-2C-methyl-D-erythritol. In Corynebacterium diphtheriae (strain ATCC 700971 / NCTC 13129 / Biotype gravis), this protein is 4-diphosphocytidyl-2-C-methyl-D-erythritol kinase.